We begin with the raw amino-acid sequence, 412 residues long: UPF0754 membrane protein Synpcc7942_1098 (412 aa).

Transmembrane regions (helical) follow at residues 8-28 (LWLLPPVVGGIIGYFTNDLAI) and 390-410 (IGGVLGVLLGCVQSLINVWSL).

It belongs to the UPF0754 family.

The protein resides in the cell inner membrane. The polypeptide is UPF0754 membrane protein Synpcc7942_1098 (Synechococcus elongatus (strain ATCC 33912 / PCC 7942 / FACHB-805) (Anacystis nidulans R2)).